The chain runs to 94 residues: PqqA binding protein (94 aa).

Belongs to the PqqD family. In terms of assembly, monomer. Interacts with PqqE.

It functions in the pathway cofactor biosynthesis; pyrroloquinoline quinone biosynthesis. Its function is as follows. Functions as a PqqA binding protein and presents PqqA to PqqE, in the pyrroloquinoline quinone (PQQ) biosynthetic pathway. The protein is PqqA binding protein of Acinetobacter baumannii (strain AB307-0294).